We begin with the raw amino-acid sequence, 325 residues long: DNA repair and recombination protein RadA (325 aa).

Position 107 to 114 (107 to 114) interacts with ATP; the sequence is GEFGSGKT.

The protein belongs to the eukaryotic RecA-like protein family.

Functionally, involved in DNA repair and in homologous recombination. Binds and assemble on single-stranded DNA to form a nucleoprotein filament. Hydrolyzes ATP in a ssDNA-dependent manner and promotes DNA strand exchange between homologous DNA molecules. In Methanosarcina acetivorans (strain ATCC 35395 / DSM 2834 / JCM 12185 / C2A), this protein is DNA repair and recombination protein RadA.